The chain runs to 437 residues: Putative metabolite transport protein NicT (437 aa).

The next 12 helical transmembrane spans lie at 28 to 48 (LIPFLCFCYLAAYLDRINVGF), 66 to 86 (LGAGLFFVGYIIFEVPSNLIL), 93 to 113 (LWIARIMITWGLLSACTMFVT), 123 to 143 (FLLGAAEAGFLPGVLYYLTMW), 152 to 172 (IIALFMIGLPLSSVIGGPISG), 189 to 209 (WLFLLEAIPSVLLGILTFWAL), 254 to 274 (VWMLGGIDFSILLSAYAMGFW), 290 to 310 (IGLLTAIPSLAALAGMLMIGA), 320 to 340 (WHIIVPFIIGAIAMASSTLFS), 347 to 367 (VVLFAIASAAIIGAVPVFFSL), 374 to 394 (GTAAATGFALACSVANIAGLV), and 411 to 431 (AALWVFAGCLILSCFLVIALP).

This sequence belongs to the major facilitator superfamily.

The protein resides in the membrane. Its function is as follows. Probable transporter, possibly involved in the aerobic nicotinate degradation pathway. This Pseudomonas putida (strain ATCC 47054 / DSM 6125 / CFBP 8728 / NCIMB 11950 / KT2440) protein is Putative metabolite transport protein NicT (nicT).